A 643-amino-acid polypeptide reads, in one-letter code: Alpha-dioxygenase 1 (643 aa).

Histidine 167 functions as the Proton acceptor in the catalytic mechanism. Aspartate 168 provides a ligand contact to Ca(2+). Histidine 172 provides a ligand contact to heme b. Threonine 220, tryptophan 222, aspartate 224, and serine 226 together coordinate Ca(2+). Residues histidine 392, arginine 489, and arginine 493 each coordinate heme b.

The protein belongs to the peroxidase family. Heme b serves as cofactor. The cofactor is Ca(2+).

Alpha-dioxygenase that catalyzes the primary oxygenation step of a variety of 14-20 carbon fatty acids, containing up to three unsaturated bonds, into their corresponding 2R-hydroperoxides. Involved in the production of oxylipins that function in cell signaling, wound healing, and protection from infection. The lipid-derived signaling pathway is involved in the initial response of hot pepper plants to pathogen infection. The chain is Alpha-dioxygenase 1 from Capsicum annuum (Capsicum pepper).